A 592-amino-acid chain; its full sequence is Anaphase-promoting complex subunit 8 (592 aa).

8 TPR repeats span residues 66 to 99, 160 to 193, 291 to 324, 359 to 392, 393 to 426, 428 to 460, 461 to 494, and 496 to 528; these read EYYK…QLPI, QQQQ…NKKD, TYIL…EPNR, PETC…NDRY, LSAW…NPRD, RAWY…RPYD, PRMW…YDRE, and VAIN…CDQE. Residues 129 to 166 form a disordered region; sequence QQQAQQQAQQAQQESQQNDKNNDTNNNNKTDQQQQQQQ.

Belongs to the APC8/CDC23 family. In terms of assembly, the APC/C is composed of at least 13 subunits that stay tightly associated throughout the cell cycle: anapc1, anapc2, anapc3, anapc4, anapc5, anapc6, anapc7, anapc8, anapc10, anapc11, cdc20, cdc26 and cdh1.

It localises to the nucleus. It functions in the pathway protein modification; protein ubiquitination. Component of the anaphase promoting complex/cyclosome (APC/C), a cell cycle-regulated E3 ubiquitin-protein ligase complex that controls progression through mitosis and the G1 phase of the cell cycle. This Dictyostelium discoideum (Social amoeba) protein is Anaphase-promoting complex subunit 8 (anapc8).